The chain runs to 158 residues: Protein-export protein SecB (158 aa).

Belongs to the SecB family. Homotetramer, a dimer of dimers. One homotetramer interacts with 1 SecA dimer.

It localises to the cytoplasm. In terms of biological role, one of the proteins required for the normal export of preproteins out of the cell cytoplasm. It is a molecular chaperone that binds to a subset of precursor proteins, maintaining them in a translocation-competent state. It also specifically binds to its receptor SecA. In Anaplasma phagocytophilum (strain HZ), this protein is Protein-export protein SecB.